The sequence spans 358 residues: Carbamoyl phosphate synthase small chain (358 aa).

The interval 1–168 (MKRLLLLEDG…TKLAYASPGV (168 aa)) is CPSase. L-glutamine-binding residues include serine 45, glycine 219, and glycine 221. The Glutamine amidotransferase type-1 domain maps to 171–357 (NIVLVDFGLK…INMIDDFQQK (187 aa)). Cysteine 246 acts as the Nucleophile in catalysis. Residues methionine 247, glutamine 250, asparagine 288, glycine 290, and tyrosine 291 each contribute to the L-glutamine site. Active-site residues include histidine 330 and aspartate 332.

The protein belongs to the CarA family. As to quaternary structure, composed of two chains; the small (or glutamine) chain promotes the hydrolysis of glutamine to ammonia, which is used by the large (or ammonia) chain to synthesize carbamoyl phosphate. Tetramer of heterodimers (alpha,beta)4.

It carries out the reaction hydrogencarbonate + L-glutamine + 2 ATP + H2O = carbamoyl phosphate + L-glutamate + 2 ADP + phosphate + 2 H(+). It catalyses the reaction L-glutamine + H2O = L-glutamate + NH4(+). It participates in amino-acid biosynthesis; L-arginine biosynthesis; carbamoyl phosphate from bicarbonate: step 1/1. It functions in the pathway pyrimidine metabolism; UMP biosynthesis via de novo pathway; (S)-dihydroorotate from bicarbonate: step 1/3. In terms of biological role, small subunit of the glutamine-dependent carbamoyl phosphate synthetase (CPSase). CPSase catalyzes the formation of carbamoyl phosphate from the ammonia moiety of glutamine, carbonate, and phosphate donated by ATP, constituting the first step of 2 biosynthetic pathways, one leading to arginine and/or urea and the other to pyrimidine nucleotides. The small subunit (glutamine amidotransferase) binds and cleaves glutamine to supply the large subunit with the substrate ammonia. The chain is Carbamoyl phosphate synthase small chain from Streptococcus agalactiae serotype III (strain NEM316).